The primary structure comprises 921 residues: MDKTYSPEAIEKALYKKWESHHYFQPRGEGKRFCIMLPPPNVTGSLHMGHGFQHTIMDALTRYHRMLGDKTLWQPGTDHAGISTQLVVERQLEAQGVSRKDLTREQFLDKVWQWKEESGNTITQQMRRLGASVDWSRERFTMDEGLSAAVQKVFVQLYEEGLIYRGTRLVNWDPKLGTAVSDLEVLSEEEDGFLWHIRYPVVDSEEFLIVATTRPETLLGDCAVAIHPDDSRFRHLIGKQVHLPLCDRTIPVIADDYVDKEFGSGCVKITPAHDFNDHEVGKRHQLPQINILTKKGTINKNAPLKYQGMDRFVAREQIIKDLEKEGLLAKTEPHKLKVPRGEKSNVIIEPLLTDQWYVKTKPLAEPAIAAVKKGDIRFIPETWDKTYFQWMDNIEDWCISRQLWWGHRIPAWYDNHGNIYVGYSENDVRFKHKIDQSTPLKQDEDVLDTWFSSALWPFSTLGWPERTPELEQFYPTSVLVTGFDIIFFWVARMIMMGLKFTGKIPFKEVFITGLIRDSEGHKMSKSKGNVLDPLDIVDGIDLDSLIAKRTSNLMLNSVRDRITKATRKEFPEGISAYGTDALRFTYCSLASTGRNVRFDLGRVEGYRNFCNKLWNAARYVLLNTDEEQIDFGDGAFQYSPADQWILSRLQNTVSKVHHYFETYRFDLLANTLYEFVWHEYCDWYLELSKPILQDDQALSAMKRGTRRTLIHVLDQILKLLHPLMPFITEEIWQKTTKFTSENGISIMLSTYPKVNEEFINPAIEEELDWLKSAIQSLRTIRSEMSISPAKLIPLYIRNITPELKERIAKYEKILKTLSKIDKINYLAPDEKVPVSATAVLGEIELLIPMADLIDKEAELSRLNKELAKLNKDIELAQGKLNNPKFTDKAPEEIIAKEKDKLAQAQVAKDKLLQHKNRIESL.

The short motif at 40–50 (PNVTGSLHMGH) is the 'HIGH' region element. The 'KMSKS' region motif lies at 522 to 526 (KMSKS). Residue Lys-525 participates in ATP binding. Residues 849–921 (MADLIDKEAE…LQHKNRIESL (73 aa)) are a coiled coil.

This sequence belongs to the class-I aminoacyl-tRNA synthetase family. ValS type 1 subfamily. In terms of assembly, monomer.

It localises to the cytoplasm. It catalyses the reaction tRNA(Val) + L-valine + ATP = L-valyl-tRNA(Val) + AMP + diphosphate. In terms of biological role, catalyzes the attachment of valine to tRNA(Val). As ValRS can inadvertently accommodate and process structurally similar amino acids such as threonine, to avoid such errors, it has a 'posttransfer' editing activity that hydrolyzes mischarged Thr-tRNA(Val) in a tRNA-dependent manner. The polypeptide is Valine--tRNA ligase (Legionella pneumophila (strain Paris)).